A 102-amino-acid polypeptide reads, in one-letter code: Small ribosomal subunit protein uS10 (102 aa).

The protein belongs to the universal ribosomal protein uS10 family. As to quaternary structure, part of the 30S ribosomal subunit.

Involved in the binding of tRNA to the ribosomes. The chain is Small ribosomal subunit protein uS10 from Paramagnetospirillum magneticum (strain ATCC 700264 / AMB-1) (Magnetospirillum magneticum).